Consider the following 121-residue polypeptide: Autophagy-related protein 8 (121 aa).

Gly-116 carries Phosphatidylethanolamine amidated glycine lipidation. Residues 117–121 constitute a propeptide, removed in mature form; it reads DFETA.

This sequence belongs to the ATG8 family. Post-translationally, the C-terminal 5 residues are removed to expose Gly-116 at the C-terminus. The C-terminal Gly is then amidated with phosphatidylethanolamine by an activating system similar to that for ubiquitin.

The protein localises to the cytoplasmic vesicle. Its subcellular location is the autophagosome membrane. It is found in the vacuole membrane. Functionally, ubiquitin-like modifier involved in autophagosome formation. With cpr-1/atg4, mediates the delivery of the autophagosomes to the vacuole via the microtubule cytoskeleton. Required for selective autophagic degradation of the nucleus (nucleophagy) as well as for mitophagy which contributes to regulate mitochondrial quantity and quality by eliminating the mitochondria to a basal level to fulfill cellular energy requirements and preventing excess ROS production. Also participates in membrane fusion events that take place in the early secretory pathway. Also involved in endoplasmic reticulum-specific autophagic process and is essential for the survival of cells subjected to severe ER stress. The apg-6/atg8-PE conjugate mediates tethering between adjacent membranes and stimulates membrane hemifusion, leading to expansion of the autophagosomal membrane during autophagy. This chain is Autophagy-related protein 8 (apg-6), found in Neurospora crassa (strain ATCC 24698 / 74-OR23-1A / CBS 708.71 / DSM 1257 / FGSC 987).